We begin with the raw amino-acid sequence, 311 residues long: Pyrimidine-specific ribonucleoside hydrolase RihA (311 aa).

H240 is an active-site residue.

The protein belongs to the IUNH family. RihA subfamily.

Functionally, hydrolyzes cytidine or uridine to ribose and cytosine or uracil, respectively. The sequence is that of Pyrimidine-specific ribonucleoside hydrolase RihA from Salmonella paratyphi C (strain RKS4594).